The primary structure comprises 314 residues: 1-aminocyclopropane-1-carboxylate oxidase 1 (314 aa).

The Fe2OG dioxygenase domain maps to 153–253 (PNFGTKVSNY…RMSIASFYNP (101 aa)). Fe cation is bound by residues His177, Asp179, and His234.

Belongs to the iron/ascorbate-dependent oxidoreductase family. As to quaternary structure, monomer. Fe cation is required as a cofactor.

The catalysed reaction is 1-aminocyclopropane-1-carboxylate + L-ascorbate + O2 = ethene + L-dehydroascorbate + hydrogen cyanide + CO2 + 2 H2O. It functions in the pathway alkene biosynthesis; ethylene biosynthesis via S-adenosyl-L-methionine; ethylene from S-adenosyl-L-methionine: step 2/2. The polypeptide is 1-aminocyclopropane-1-carboxylate oxidase 1 (Malus domestica (Apple)).